The sequence spans 352 residues: Bifunctional protein FolD 1, mitochondrial (352 aa).

The transit peptide at 1–23 (MLMIARKALASAHTKAFRLATRD) directs the protein to the mitochondrion.

The protein belongs to the tetrahydrofolate dehydrogenase/cyclohydrolase family. Homodimer.

The protein localises to the mitochondrion. It carries out the reaction (6R)-5,10-methylene-5,6,7,8-tetrahydrofolate + NADP(+) = (6R)-5,10-methenyltetrahydrofolate + NADPH. The enzyme catalyses (6R)-5,10-methenyltetrahydrofolate + H2O = (6R)-10-formyltetrahydrofolate + H(+). Its pathway is one-carbon metabolism; tetrahydrofolate interconversion. Functionally, catalyzes the oxidation of 5,10-methylenetetrahydrofolate to 5,10-methenyltetrahydrofolate and then the hydrolysis of 5,10-methenyltetrahydrofolate to 10-formyltetrahydrofolate. The sequence is that of Bifunctional protein FolD 1, mitochondrial (FOLD1) from Arabidopsis thaliana (Mouse-ear cress).